Consider the following 457-residue polypeptide: Tryptophan aminotransferase-related protein 3 (457 aa).

Residues 6–26 (LLIAGSIILNLVFTIHILYNN) traverse the membrane as a helical segment. Residues tyrosine 123, 163 to 164 (AT), asparagine 237, 257 to 260 (DYAY), 280 to 283 (SLSK), and arginine 291 each bind pyridoxal 5'-phosphate. Lysine 283 is subject to N6-(pyridoxal phosphate)lysine.

Belongs to the alliinase family. The cofactor is pyridoxal 5'-phosphate.

Its subcellular location is the membrane. Its function is as follows. Probable aminotransferase. The chain is Tryptophan aminotransferase-related protein 3 (TAR3) from Arabidopsis thaliana (Mouse-ear cress).